We begin with the raw amino-acid sequence, 235 residues long: Claudin-16 (235 aa).

The Cytoplasmic portion of the chain corresponds to 1–3; that stretch reads MKD. The helical transmembrane segment at 4–24 threads the bilayer; that stretch reads LLQYAACFLAIFSTGFLIVAT. The Extracellular portion of the chain corresponds to 25 to 79; sequence WTDCWMVNADDSLEVSTKCRGLWWECVTNAFDGIRTCDEYDSIYAEHPLKLVVTR. A helical transmembrane segment spans residues 80–100; that stretch reads ALMITADILAGFGFITLLLGL. Over 101-115 the chain is Cytoplasmic; the sequence is DCVKFLPDDPQIKVR. The helical transmembrane segment at 116–136 threads the bilayer; sequence LCFVAGTTLLIAGTPGIIGSV. Over 137-169 the chain is Extracellular; it reads WYAVDVYVERSSLVLHNIFLGIQYKFGWSCWLG. Residues 170-190 form a helical membrane-spanning segment; sequence MAGSLGCFLAGALLTCCLYLF. Over 191-235 the chain is Cytoplasmic; sequence KDVGPERNYPYAMRKPYSTAGVSMAKSYKAPRTETAKMYAVDTRV. The Interaction with TJP1 signature appears at 233-235; that stretch reads TRV.

This sequence belongs to the claudin family. As to quaternary structure, can form heteropolymeric tight junction strands with other claudins. Interacts with CLDN19. Cannot form tight junction strands on its own. Interacts (via PDZ-binding motif TRV) with TJP1 (via PDZ domain). In terms of tissue distribution, expressed in the corticomedullary axis of the TAL, specifically in the cortex and the outer stripe of outer medulla (OSOM) zone (at protein level).

The protein resides in the cell junction. The protein localises to the tight junction. It is found in the cell membrane. It carries out the reaction Mg(2+)(in) = Mg(2+)(out). The catalysed reaction is Ca(2+)(in) = Ca(2+)(out). The enzyme catalyses Na(+)(in) = Na(+)(out). It catalyses the reaction K(+)(in) = K(+)(out). It carries out the reaction Rb(+)(in) = Rb(+)(out). The catalysed reaction is Cs(+)(in) = Cs(+)(out). The enzyme catalyses Li(+)(in) = Li(+)(out). Its function is as follows. Forms paracellular channels: coassembles with CLDN19 into tight junction strands with cation-selective channels through the strands, conveying epithelial permeability in a process known as paracellular tight junction permeability. Involved in the maintenance of ion gradients along the nephron. In the thick ascending limb (TAL) of Henle's loop, facilitates sodium paracellular permeability from the interstitial compartment to the lumen, contributing to the lumen-positive transepithelial potential that drives paracellular magnesium and calcium reabsorption. The polypeptide is Claudin-16 (Mus musculus (Mouse)).